Consider the following 404-residue polypeptide: MHHHHQQPSYGSGYPGQAYRQQQNPYPQYGHPSPQPYPPQNGYSHPSSGYPPSPAPPNGGQMYHGRQPSYPPNQYPPAHGGPTAPPTNPQAFGHGAPQGYNFQYSRCTGKRKALLIGINYFGQKGQLRGCINDVKNMSTYLNQNFGYAREDMVILTDDQQNPMSQPTKANILRAMHWLVKDAQPNDSLFFHYSGHGGQTPDLDGDEDDGYDEVIYPVDFRVAGHIVDDEMHRIMVKPLQPGVRLTAIFDSCHSGSALDLPYIYSTQGILKEPNLAKEAGQGLLGVISSYARGDMGGMMSTAVGFLKKAAKGDEAYQRTKQTKTSPADVIMWSGSKDDQTSQDAQIAGQATGAMSWAFITAMRKNPQQSYVQLLNSIRDELSTRYTQKPQLSSSHPLDVNLLYVM.

A disordered region spans residues 1–97; it reads MHHHHQQPSY…NPQAFGHGAP (97 aa). Catalysis depends on residues His195 and Cys251.

It belongs to the peptidase C14B family.

Functionally, involved in cell death (apoptosis). In Emericella nidulans (strain FGSC A4 / ATCC 38163 / CBS 112.46 / NRRL 194 / M139) (Aspergillus nidulans), this protein is Metacaspase-1 (casA).